Here is a 757-residue protein sequence, read N- to C-terminus: Elongation factor G, mitochondrial (757 aa).

Residues Met1–Cys41 constitute a mitochondrion transit peptide. Residues Lys66–Ser347 form the tr-type G domain. GTP contacts are provided by residues Ala75–Thr82, Asp146–His150, and Asn200–Asp203.

It belongs to the TRAFAC class translation factor GTPase superfamily. Classic translation factor GTPase family. EF-G/EF-2 subfamily.

The protein localises to the mitochondrion. The protein operates within protein biosynthesis; polypeptide chain elongation. Mitochondrial GTPase that catalyzes the GTP-dependent ribosomal translocation step during translation elongation. During this step, the ribosome changes from the pre-translocational (PRE) to the post-translocational (POST) state as the newly formed A-site-bound peptidyl-tRNA and P-site-bound deacylated tRNA move to the P and E sites, respectively. Catalyzes the coordinated movement of the two tRNA molecules, the mRNA and conformational changes in the ribosome. The polypeptide is Elongation factor G, mitochondrial (Eremothecium gossypii (strain ATCC 10895 / CBS 109.51 / FGSC 9923 / NRRL Y-1056) (Yeast)).